Here is a 315-residue protein sequence, read N- to C-terminus: Olfactory receptor 2T5 (315 aa).

Residues 1–29 (MANITRMANHTGKLDFILMGLFRRSKHPA) lie on the Extracellular side of the membrane. N-linked (GlcNAc...) asparagine glycans are attached at residues asparagine 3 and asparagine 9. Residues 30–53 (LLSVVIFVVFLKALSGNAVLILLI) traverse the membrane as a helical segment. Residues 54–61 (HCDAHLHS) are Cytoplasmic-facing. Residues 62 to 83 (PMYFFISQLSLMDMAYISVTVP) form a helical membrane-spanning segment. The Extracellular portion of the chain corresponds to 84-104 (KMLLDQVMGVNKVSAPECGMQ). Cysteine 101 and cysteine 193 are disulfide-bonded. The chain crosses the membrane as a helical span at residues 105–124 (MFLYLTLAGSEFFLLATMAY). At 125 to 143 (DRYVAICHPLRYPVLMNHR) the chain is on the cytoplasmic side. A helical membrane pass occupies residues 144–162 (VCLFLASGCWFLGSVDGFM). Residues 163–199 (LTPITMSFPFCRSWEIHHFFCEVPAVTILSCSDTSLY) lie on the Extracellular side of the membrane. Residues 200-223 (ETLMYLCCVLMLLIPVTIISSSYL) traverse the membrane as a helical segment. Topologically, residues 224 to 240 (LILLTVHRMNSAEGRKK) are cytoplasmic. Residues 241–263 (AFATCSSHLTVVILFYGAAVYTY) form a helical membrane-spanning segment. At 264 to 276 (MLPSSYHTPEKDM) the chain is on the extracellular side. The helical transmembrane segment at 277-296 (MVSVFYTILTPVLNPLIYSL) threads the bilayer. Residues 297 to 315 (RNKDVMGALKKMLTVRFVL) are Cytoplasmic-facing.

The protein belongs to the G-protein coupled receptor 1 family.

It localises to the cell membrane. Odorant receptor. The chain is Olfactory receptor 2T5 (OR2T5) from Homo sapiens (Human).